The following is a 510-amino-acid chain: Leucine-rich repeat-containing protein 53 (510 aa).

LRR repeat units follow at residues 34–55, 58–79, 82–102, 108–129, 132–153, 158–179, and 182–203; these read TTRV…NLSL, NLAL…ALDG, MLRT…TDHT, SLQV…WFRN, GLTR…SFGG, SLRH…AFRP, and QLQE…FTPL. The LRRCT domain maps to 214-271; that stretch reads NQWSCTCDLHPLARFLRNYIKSSAHTLRNAKDLNCQPSTAAVAAAQSVLRLSETNCDP. A helical membrane pass occupies residues 294–314; sequence LLTVLGFAGAVGLTCLGLVVF.

The protein localises to the membrane. The protein is Leucine-rich repeat-containing protein 53 (LRRC53) of Macaca fascicularis (Crab-eating macaque).